The following is a 182-amino-acid chain: Pentatricopeptide repeat-containing protein At2g01360 (182 aa).

3 PPR repeats span residues 30 to 64 (EKSA…QHSL), 65 to 95 (GVYH…LPDD), and 98 to 132 (GLSA…EIMP).

It belongs to the PPR family. P subfamily.

In Arabidopsis thaliana (Mouse-ear cress), this protein is Pentatricopeptide repeat-containing protein At2g01360.